The chain runs to 115 residues: Envelope glycoprotein N (115 aa).

The N-terminal stretch at 1–27 (MWLLRPAGSNFIVALIVLACAGPLTCS) is a signal peptide. Residues 28–77 (AQLDAGILNPWGSAGHNDAVMPGMFANSESDERFYSPHCSSRGLPLVNES) lie on the Virion surface side of the membrane. A helical transmembrane segment spans residues 78 to 98 (MASVIFFLSLAMVCVAIVAIL). Residues 99 to 115 (YNCCFNSFKNSVINSRW) lie on the Intravirion side of the membrane.

Belongs to the herpesviridae glycoprotein N family. Interacts (via N-terminus) with gM (via N-terminus). The gM-gN heterodimer forms the gCII complex.

It is found in the virion membrane. It localises to the host membrane. The protein resides in the host Golgi apparatus. The protein localises to the host trans-Golgi network. Envelope glycoprotein necessary for proper maturation of gM and modulation of its membrane fusion activity. Also plays a critical role in virion morphogenesis. This Psittacid herpesvirus 1 (isolate Amazon parrot/-/97-0001/1997) (PsHV-1) protein is Envelope glycoprotein N.